The following is a 243-amino-acid chain: Probable transcriptional regulatory protein BAPKO_0024/BafPKo_0025 (243 aa).

The protein belongs to the TACO1 family.

The protein resides in the cytoplasm. The protein is Probable transcriptional regulatory protein BAPKO_0024/BafPKo_0025 of Borreliella afzelii (strain PKo) (Borrelia afzelii).